A 204-amino-acid polypeptide reads, in one-letter code: Urease accessory protein UreG (204 aa).

12–19 (GPVGSGKT) is a binding site for GTP.

Belongs to the SIMIBI class G3E GTPase family. UreG subfamily. As to quaternary structure, homodimer. UreD, UreF and UreG form a complex that acts as a GTP-hydrolysis-dependent molecular chaperone, activating the urease apoprotein by helping to assemble the nickel containing metallocenter of UreC. The UreE protein probably delivers the nickel.

The protein resides in the cytoplasm. Its function is as follows. Facilitates the functional incorporation of the urease nickel metallocenter. This process requires GTP hydrolysis, probably effectuated by UreG. This is Urease accessory protein UreG from Pseudomonas paraeruginosa (strain DSM 24068 / PA7) (Pseudomonas aeruginosa (strain PA7)).